Consider the following 311-residue polypeptide: Olfactory receptor 6C3 (311 aa).

Over 1–22 the chain is Extracellular; it reads MNHTMVTEFVLLGLSDDPDLQI. A glycan (N-linked (GlcNAc...) asparagine) is linked at Asn-2. Residues 23-43 traverse the membrane as a helical segment; the sequence is VIFLFLFITYILSVTGNLTII. The Cytoplasmic portion of the chain corresponds to 44–51; sequence TLTFVDSH. Residues 52 to 72 traverse the membrane as a helical segment; it reads LQTPMYFFLRNFSFLEISFTT. The Extracellular segment spans residues 73–96; sequence VCIPRFLGAIITRNKTISYNNCAA. A disulfide bridge connects residues Cys-94 and Cys-186. A helical transmembrane segment spans residues 97–117; the sequence is QLFFFIFMGVTEFYILTAMSY. The Cytoplasmic segment spans residues 118-136; the sequence is DRYVAICKPLHYTSIMNRK. Residues 137-157 traverse the membrane as a helical segment; it reads LCTLLVLCAWLSGFLTIFPPL. Residues 158 to 194 lie on the Extracellular side of the membrane; sequence MLLLQLDYCASNVIDHFACDYFPLLQLSCSDTWLLEV. Residues 195–214 form a helical membrane-spanning segment; the sequence is IGFYFALVTLLFTLALVILS. Over 215–234 the chain is Cytoplasmic; it reads YMYIIRTILRIPSASQRKKA. The chain crosses the membrane as a helical span at residues 235 to 255; it reads FSTCSSHMIVISISYGSCIFM. Over 256-268 the chain is Extracellular; sequence YANPSAKEKASLT. A helical membrane pass occupies residues 269–289; it reads KGIAILNTSVAPMLNPFIYTL. At 290 to 311 the chain is on the cytoplasmic side; that stretch reads RNQQVKQAFKNVVHKVVFYANQ.

This sequence belongs to the G-protein coupled receptor 1 family.

The protein resides in the cell membrane. Odorant receptor. The sequence is that of Olfactory receptor 6C3 (OR6C3) from Homo sapiens (Human).